Reading from the N-terminus, the 387-residue chain is Galactokinase (387 aa).

33–36 is a binding site for substrate; that stretch reads EHID. ATP contacts are provided by residues Ser-67 and 124–130; that span reads GAGLSSS. Ser-130 and Glu-162 together coordinate Mg(2+). Catalysis depends on Asp-174, which acts as the Proton acceptor. Tyr-224 serves as a coordination point for substrate.

Belongs to the GHMP kinase family. GalK subfamily.

It localises to the cytoplasm. It carries out the reaction alpha-D-galactose + ATP = alpha-D-galactose 1-phosphate + ADP + H(+). Its pathway is carbohydrate metabolism; galactose metabolism. Its function is as follows. Catalyzes the transfer of the gamma-phosphate of ATP to D-galactose to form alpha-D-galactose-1-phosphate (Gal-1-P). The protein is Galactokinase of Clostridium perfringens (strain ATCC 13124 / DSM 756 / JCM 1290 / NCIMB 6125 / NCTC 8237 / Type A).